We begin with the raw amino-acid sequence, 457 residues long: MDAGMNNTSSHYKTQARCPLQEHFLPRKPSKENLDRFIPNRSAMNFDYAHFALTEGRKGKDQTAAVSSPSKEAYRKQLAETMNLNHTRILAFRNKPQAPVELLPSNHSASLHQQPKSVKPRRYIPQTSERTLDAPDIVDDFYLNLLDWGSANVLAIALDHTVYLWDASTGSTSELVTIDEEKGPVTSINWAPDGRHVAVGLNNSEVQLWDSASNRQLRTLKGGHQSRVGSLAWNNHILTTGGMDGLIINNDVRIRSPIVETYRGHTQEVCGLKWSGSGQQLASGGNDNVVHIWDRSVASSNSTTQWLHRLEEHTSAVKALAWCPFQANLLATGGGGGDRTIKFWNTHTGACLNSVDTGSQVCSLLWSKNERELLSSHGFTQNQLTLWKYPSMVKMAELTGHTSRVLYMAQSPDGCTVASAAGDETLRFWNVFGVPETAKKAAPKAVSEPFSHVNRIR.

7 WD repeats span residues 138–175 (VDDF…TSEL), 180–219 (EEKG…QLRT), 223–260 (GHQS…PIVE), 264–303 (GHTQ…SNST), 312–354 (EHTS…CLNS), 356–397 (DTGS…KMAE), and 400–439 (GHTS…ETAK).

It belongs to the WD repeat CDC20/Fizzy family. As to quaternary structure, the APC/C is composed of at least 11 subunits that stay tightly associated throughout the cell cycle. Interacts with APC10, FZR1, FZR2, FZR3. Binds to GIG1 and PYM. Part of the mitotic checkpoint complex (MCC); interacts with MAD2, BUB3.1, BUBR1 and BUB1. Binds to cyclins CYCA1-2, CYCB2-1 and CYCB2-2. Interacts with PANS1. In terms of tissue distribution, expressed in meristems and organ primordia. Present in flowers, leaves, stems, roots, pollen grains and developing seeds.

It is found in the nucleus. It functions in the pathway protein modification; protein ubiquitination. Functionally, component of the anaphase promoting complex/cyclosome (APC/C), a cell cycle-regulated E3 ubiquitin-protein ligase complex that controls progression through mitosis and the G1 phase of the cell cycle. The chain is Cell division cycle 20.1, cofactor of APC complex (CDC20-1) from Arabidopsis thaliana (Mouse-ear cress).